The following is a 196-amino-acid chain: MAPPNKNPNGYYVESFPAPGLRQIVRHITGLNKQGESVFLHSDHGDHHRFMVQNQAISNLLYSTQETPVDLNNNIDIQKAKEKEPPFHYKSGSIVRMIDFGPGVESPLHRAMTIDYGIIVEGVFELILDSGEKRIMRQGDVSVQRATAHKWVNVTGNGTLPGRVMWVLLDCKEVVDAKGEKVEGYLGSLQEHYEGR.

The interval 99–165 is cupin-like domain; it reads DFGPGVESPL…GNGTLPGRVM (67 aa).

Belongs to the virC family.

Highly reducing polyketide synthase; part of the gene cluster that mediates the biosynthesis of sordarial, a salicylic aldehyde structurally related to the phytotoxin pyriculol. The most interesting aspect of this pathway is formation of an aromatic product from the highly reducing polyketide synthase srdA. SrdA synthesizes a reduced polyketide chain from one molecule of acetyl-CoA and five molecules of malonyl-CoA. The polyketide chain is then reductively released as an aldehyde. The oxidoreductases srdC, srdD and srdE then oxidize one of the hydroxy groups to facilitate the intramolecular aldol condensation, followed by dehydration to yield a salicylic aldehyde. This aldehyde can undergo facile reduction by endogenous reductases to yield the alcohol 1-hydroxy-2-hydroxymethyl-3-pent-1,3-dienylbenzene. The flavin-dependent srdI counteract against the propensity of the aldehydes to be reduced under physiological conditions and is responsible for reoxidizing 1-hydroxy-2-hydroxymethyl-3-pent-1,3-dienylbenzene back to the salicylic aldehyde. This salicylic aldehyde is then selectively epoxidized by the cupin-domain-containing oxidoreductase srdB to yield the epoxide, which can be hydrolyzed stereoselectively by the hydrolase srdG to give the final product sordarial. The sequence is that of Cupin-domain-containing oxidoreductase srdD from Neurospora crassa (strain ATCC 24698 / 74-OR23-1A / CBS 708.71 / DSM 1257 / FGSC 987).